Consider the following 151-residue polypeptide: Large ribosomal subunit protein bL9 (151 aa).

It belongs to the bacterial ribosomal protein bL9 family.

Binds to the 23S rRNA. The polypeptide is Large ribosomal subunit protein bL9 (Mycolicibacterium smegmatis (strain ATCC 700084 / mc(2)155) (Mycobacterium smegmatis)).